The primary structure comprises 569 residues: Proline--tRNA ligase (569 aa).

The protein belongs to the class-II aminoacyl-tRNA synthetase family. ProS type 1 subfamily. Homodimer.

It is found in the cytoplasm. It carries out the reaction tRNA(Pro) + L-proline + ATP = L-prolyl-tRNA(Pro) + AMP + diphosphate. In terms of biological role, catalyzes the attachment of proline to tRNA(Pro) in a two-step reaction: proline is first activated by ATP to form Pro-AMP and then transferred to the acceptor end of tRNA(Pro). As ProRS can inadvertently accommodate and process non-cognate amino acids such as alanine and cysteine, to avoid such errors it has two additional distinct editing activities against alanine. One activity is designated as 'pretransfer' editing and involves the tRNA(Pro)-independent hydrolysis of activated Ala-AMP. The other activity is designated 'posttransfer' editing and involves deacylation of mischarged Ala-tRNA(Pro). The misacylated Cys-tRNA(Pro) is not edited by ProRS. The protein is Proline--tRNA ligase of Legionella pneumophila subsp. pneumophila (strain Philadelphia 1 / ATCC 33152 / DSM 7513).